The sequence spans 386 residues: Bifunctional enzyme IspD/IspF (386 aa).

Positions 1 to 230 (MIRDERVAAI…RARSILEAPV (230 aa)) are 2-C-methyl-D-erythritol 4-phosphate cytidylyltransferase. A 2-C-methyl-D-erythritol 2,4-cyclodiphosphate synthase region spans residues 231–386 (AMGVGYDTHR…HAVALLVRVR (156 aa)). A divalent metal cation contacts are provided by Asp237 and His239. Residues 237-239 (DTH) and 262-263 (HS) each bind 4-CDP-2-C-methyl-D-erythritol 2-phosphate. His270 is an a divalent metal cation binding site. 4-CDP-2-C-methyl-D-erythritol 2-phosphate-binding positions include 284-286 (DLG), 289-293 (FPDTD), 360-363 (TTGE), Phe367, and Arg370.

The protein in the N-terminal section; belongs to the IspD/TarI cytidylyltransferase family. IspD subfamily. This sequence in the C-terminal section; belongs to the IspF family. The cofactor is a divalent metal cation.

It catalyses the reaction 2-C-methyl-D-erythritol 4-phosphate + CTP + H(+) = 4-CDP-2-C-methyl-D-erythritol + diphosphate. It carries out the reaction 4-CDP-2-C-methyl-D-erythritol 2-phosphate = 2-C-methyl-D-erythritol 2,4-cyclic diphosphate + CMP. Its pathway is isoprenoid biosynthesis; isopentenyl diphosphate biosynthesis via DXP pathway; isopentenyl diphosphate from 1-deoxy-D-xylulose 5-phosphate: step 2/6. It participates in isoprenoid biosynthesis; isopentenyl diphosphate biosynthesis via DXP pathway; isopentenyl diphosphate from 1-deoxy-D-xylulose 5-phosphate: step 4/6. Bifunctional enzyme that catalyzes the formation of 4-diphosphocytidyl-2-C-methyl-D-erythritol from CTP and 2-C-methyl-D-erythritol 4-phosphate (MEP) (IspD), and catalyzes the conversion of 4-diphosphocytidyl-2-C-methyl-D-erythritol 2-phosphate (CDP-ME2P) to 2-C-methyl-D-erythritol 2,4-cyclodiphosphate (ME-CPP) with a corresponding release of cytidine 5-monophosphate (CMP) (IspF). The chain is Bifunctional enzyme IspD/IspF from Anaeromyxobacter sp. (strain Fw109-5).